The following is a 543-amino-acid chain: Ipecac alkaloid beta-glucosidase 2 (543 aa).

A beta-D-glucoside is bound by residues Gln36, His140, 185 to 186 (NE), Tyr350, Glu422, Trp471, and Phe487. Glu186 functions as the Proton donor in the catalytic mechanism. Glu422 (nucleophile) is an active-site residue.

The protein belongs to the glycosyl hydrolase 1 family.

The protein resides in the cytoplasm. The protein localises to the cytosol. It catalyses the reaction deacetylipecoside + H2O = deacetylipecoside aglycone + D-glucose. It carries out the reaction deacetylisoipecoside + H2O = deacetylisoipecoside aglycone + D-glucose. It participates in alkaloid biosynthesis. Beta-glucosidase catalyzing deglucosylation on N-deacetylisoipecoside and N-deacetylipecoside. In Carapichea ipecacuanha (Ipecac), this protein is Ipecac alkaloid beta-glucosidase 2.